A 292-amino-acid polypeptide reads, in one-letter code: ATP synthase gamma chain (292 aa).

Belongs to the ATPase gamma chain family. As to quaternary structure, F-type ATPases have 2 components, CF(1) - the catalytic core - and CF(0) - the membrane proton channel. CF(1) has five subunits: alpha(3), beta(3), gamma(1), delta(1), epsilon(1). CF(0) has three main subunits: a, b and c.

The protein localises to the cell inner membrane. Produces ATP from ADP in the presence of a proton gradient across the membrane. The gamma chain is believed to be important in regulating ATPase activity and the flow of protons through the CF(0) complex. This is ATP synthase gamma chain from Brucella anthropi (strain ATCC 49188 / DSM 6882 / CCUG 24695 / JCM 21032 / LMG 3331 / NBRC 15819 / NCTC 12168 / Alc 37) (Ochrobactrum anthropi).